The following is a 512-amino-acid chain: 2-isopropylmalate synthase (512 aa).

A Pyruvate carboxyltransferase domain is found at 5–268; sequence LIIFDTTLRD…DIGIDTQQIL (264 aa). Residues D14, H202, H204, and N239 each contribute to the Mn(2+) site. Positions 394 to 512 are regulatory domain; sequence GFVSLSQHSE…SKADRVAAQG (119 aa).

It belongs to the alpha-IPM synthase/homocitrate synthase family. LeuA type 1 subfamily. As to quaternary structure, homodimer. The cofactor is Mn(2+).

The protein localises to the cytoplasm. It carries out the reaction 3-methyl-2-oxobutanoate + acetyl-CoA + H2O = (2S)-2-isopropylmalate + CoA + H(+). Its pathway is amino-acid biosynthesis; L-leucine biosynthesis; L-leucine from 3-methyl-2-oxobutanoate: step 1/4. In terms of biological role, catalyzes the condensation of the acetyl group of acetyl-CoA with 3-methyl-2-oxobutanoate (2-ketoisovalerate) to form 3-carboxy-3-hydroxy-4-methylpentanoate (2-isopropylmalate). This Polaromonas naphthalenivorans (strain CJ2) protein is 2-isopropylmalate synthase.